A 358-amino-acid polypeptide reads, in one-letter code: Dynein axonemal assembly factor 10 (358 aa).

6 WD repeats span residues 64 to 106 (EKSK…SPVY), 116 to 155 (NAID…TPVV), 163 to 206 (ETKR…LRWE), 208 to 250 (NIRN…PSKG), 258 to 298 (AHKS…QRSK), and 320 to 358 (LSTQ…LNTV).

As to quaternary structure, interacts with PIH1D1; the interaction associates DNAAF10 with the R2TP complex. Interacts with several dynein axonemal assembly factors.

The protein localises to the dynein axonemal particle. Functionally, key assembly factor specifically required for the stability of axonemal dynein heavy chains in cytoplasm. This Danio rerio (Zebrafish) protein is Dynein axonemal assembly factor 10 (dnaaf10).